The primary structure comprises 510 residues: Protein fork head (510 aa).

Disordered stretches follow at residues 1–62 (MQKL…SPLA) and 175–205 (AMPP…YRRS). The span at 20-39 (SGGGGPPSGGGGGGGGGGGG) shows a compositional bias: gly residues. Positions 47–60 (NNPNPTSNGGSMSP) are enriched in low complexity. Residues serine 187 and serine 190 each carry the phosphoserine modification. The segment at residues 209-300 (AKPPYSYISL…GNMFENGCYL (92 aa)) is a DNA-binding region (fork-head). The interval 309–359 (EKKEAIRQLHKSPSHSSLEATSPGKKDHEDSHHMHHHHHSRLDHHQHHKEA) is disordered. Phosphoserine is present on residues serine 320, serine 322, and serine 330. A compositionally biased stretch (basic residues) spans 341-356 (HMHHHHHSRLDHHQHH).

It localises to the nucleus. Its function is as follows. Fkh promotes terminal as opposed to segmental development. In the absence of fkh, this developmental switch does not occur. The nuclear localization of the fkh protein suggest that fkh regulates the transcription of other, subordinate, genes. The sequence is that of Protein fork head (fkh) from Drosophila melanogaster (Fruit fly).